The chain runs to 200 residues: MAMSQVVNTYPLSNYSFGTKEPKLEKDTSVADRLARMKINYMKEGMRTSVEGILLVQEHNHPHILLLQIGNTFCKLPGGRLKPGENEADGLKRKLTSKLGGNSAALVPDWTVGECVATWWRPNFETMMYPYCPPHITKPKECKRLYIVHLSEKEYFAVPKNLKLLAVPLFELYDNVQRYGPVISTIPQQLSRFHFNMISS.

The region spanning 45 to 172 (GMRTSVEGIL…KLLAVPLFEL (128 aa)) is the Nudix hydrolase domain. The interaction with RNA stretch occupies residues 72 to 74 (TFC). Residues 79–100 (GRLKPGENEADGLKRKLTSKLG) carry the Nudix box motif.

Belongs to the Nudix hydrolase family. CPSF5 subfamily. As to quaternary structure, homodimer. Component of the cleavage factor Im (CFIm) complex. Forms a complex with cleavage and polyadenylation specificity factor (CPSF) subunits FIPS5, PAPS4 and CPSF30.

The protein localises to the nucleus. Its function is as follows. Component of the cleavage factor Im (CFIm) complex that plays a key role in pre-mRNA 3'-processing. Involved in association with CPSF6 or CPSF7 in pre-MRNA 3'-end poly(A) site cleavage and poly(A) addition. NUDT21/CPSF5 binds to cleavage and polyadenylation RNA substrates. The homodimer mediates simultaneous sequence-specific recognition of two 5'-UGUA-3' elements within the pre-mRNA. Binds to, but does not hydrolyze mono- and di-adenosine nucleotides. May have a role in mRNA export. This is Pre-mRNA cleavage factor Im 25 kDa subunit 2 from Arabidopsis thaliana (Mouse-ear cress).